The chain runs to 283 residues: Thymidylate synthase (283 aa).

R22 contacts dUMP. The active-site Nucleophile is the C160. Residues 180–183, N191, and 221–223 each bind dUMP; these read RSCD and HIY. D183 is a binding site for (6R)-5,10-methylene-5,6,7,8-tetrahydrofolate. Position 282 (S282) interacts with (6R)-5,10-methylene-5,6,7,8-tetrahydrofolate.

This sequence belongs to the thymidylate synthase family. Bacterial-type ThyA subfamily. Homodimer.

It is found in the cytoplasm. The enzyme catalyses dUMP + (6R)-5,10-methylene-5,6,7,8-tetrahydrofolate = 7,8-dihydrofolate + dTMP. The protein operates within pyrimidine metabolism; dTTP biosynthesis. Catalyzes the reductive methylation of 2'-deoxyuridine-5'-monophosphate (dUMP) to 2'-deoxythymidine-5'-monophosphate (dTMP) while utilizing 5,10-methylenetetrahydrofolate (mTHF) as the methyl donor and reductant in the reaction, yielding dihydrofolate (DHF) as a by-product. This enzymatic reaction provides an intracellular de novo source of dTMP, an essential precursor for DNA biosynthesis. This Vibrio cholerae serotype O1 (strain ATCC 39315 / El Tor Inaba N16961) protein is Thymidylate synthase.